Here is a 144-residue protein sequence, read N- to C-terminus: 3-dehydroquinate dehydratase (144 aa).

The Proton acceptor role is filled by Tyr23. The substrate site is built by Asn74, His80, and Asp87. The active-site Proton donor is His100. Substrate contacts are provided by residues Leu101–Ser102 and Arg111.

The protein belongs to the type-II 3-dehydroquinase family. Homododecamer.

The enzyme catalyses 3-dehydroquinate = 3-dehydroshikimate + H2O. It participates in metabolic intermediate biosynthesis; chorismate biosynthesis; chorismate from D-erythrose 4-phosphate and phosphoenolpyruvate: step 3/7. Functionally, catalyzes a trans-dehydration via an enolate intermediate. The chain is 3-dehydroquinate dehydratase from Haemophilus ducreyi (strain 35000HP / ATCC 700724).